The sequence spans 37 residues: Translationally-controlled tumor protein homolog (37 aa).

Residues 1–37 (MKIFRDILTNAEVVXDNDKPMDVLDEIVYAXQGRYIE) form the TCTP domain.

It belongs to the TCTP family. As to quaternary structure, monomer.

Its subcellular location is the cytoplasm. Its function is as follows. Binds calcium; exact function not known. This is Translationally-controlled tumor protein homolog from Trypanosoma brucei brucei.